The sequence spans 507 residues: Eukaryotic translation initiation factor 4E-binding protein Mextli homolog (507 aa).

Residues 126–163 form a disordered region; sequence RPEGQHDPAPTVGIPPSATSPPTQVTSSVTSPVPSSPQ. Low complexity predominate over residues 140 to 158; it reads PPSATSPPTQVTSSVTSPV. The KH domain maps to 242–307; the sequence is QLRHEMIIRN…EDIERAKDMI (66 aa). Disordered stretches follow at residues 314-360 and 395-424; these read NMSP…DEDI and ARPSAEEREKKKERRKSMPLQQTARDQQEP. Polar residues predominate over residues 329–348; it reads QYSGMSSENQSIPSQQNTAN. Acidic residues predominate over residues 349-360; the sequence is IDEDDDDDDEDI.

As to quaternary structure, interacts with eukaryotic translation initiation factor ife-3.

It is found in the cytoplasm. Plays a role in promoting translation. This is Eukaryotic translation initiation factor 4E-binding protein Mextli homolog from Caenorhabditis elegans.